Here is a 786-residue protein sequence, read N- to C-terminus: AT-rich interactive domain-containing protein 3 (786 aa).

Over residues 1 to 16 the composition is skewed to low complexity; it reads MENLTEIESTMESLTE. Disordered regions lie at residues 1-182, 199-251, and 395-420; these read MENL…HHAD, SGDH…IPAN, and DTTVDSTNNKDAHVEANTERQDNSSA. 2 stretches are compositionally biased toward basic and acidic residues: residues 18 to 64 and 87 to 97; these read ESER…HEDS and DLPKIDDEKNS. Over residues 130–139 the composition is skewed to low complexity; that stretch reads ENIVSSEVSS. Basic and acidic residues-rich tracts occupy residues 141–156, 169–182, 199–219, 234–248, and 402–416; these read ILKDDGDAVEVDRDTA, KLSEDTGSPHHHAD, SGDHEEFPVNPDNKHSEENQS, AEEREIISPGEHKEI, and NNKDAHVEANTERQD. Residues 494–585 enclose the ARID domain; sequence EEDQSAFMKE…ALLEYERHKV (92 aa). Residues 606-638 are disordered; that stretch reads QASGSGRARRDAASRAMQGWHSQRLNGNGEVSD. The sHSP domain occupies 686–786; that stretch reads VTVVDVGPPA…FVRVPLEQLE (101 aa).

Belongs to the small heat shock protein (HSP20) family.

The protein localises to the nucleus. The sequence is that of AT-rich interactive domain-containing protein 3 (ARID3) from Arabidopsis thaliana (Mouse-ear cress).